We begin with the raw amino-acid sequence, 348 residues long: Ferredoxin--NADP reductase (348 aa).

Positions 25, 44, 52, 57, 97, 132, 298, and 339 each coordinate FAD.

It belongs to the ferredoxin--NADP reductase type 2 family. Homodimer. FAD serves as cofactor.

It carries out the reaction 2 reduced [2Fe-2S]-[ferredoxin] + NADP(+) + H(+) = 2 oxidized [2Fe-2S]-[ferredoxin] + NADPH. This chain is Ferredoxin--NADP reductase, found in Chlorobium phaeobacteroides (strain BS1).